The sequence spans 313 residues: Malate dehydrogenase (313 aa).

NAD(+)-binding positions include 8-13 (GAGNVG) and aspartate 33. Substrate is bound by residues arginine 83 and arginine 89. Residues asparagine 96 and 119–121 (ISN) contribute to the NAD(+) site. Residues asparagine 121 and arginine 152 each coordinate substrate. The active-site Proton acceptor is histidine 176.

Belongs to the LDH/MDH superfamily. MDH type 3 family.

It carries out the reaction (S)-malate + NAD(+) = oxaloacetate + NADH + H(+). Its function is as follows. Catalyzes the reversible oxidation of malate to oxaloacetate. The chain is Malate dehydrogenase from Parabacteroides distasonis (strain ATCC 8503 / DSM 20701 / CIP 104284 / JCM 5825 / NCTC 11152).